The sequence spans 514 residues: 2,3-bisphosphoglycerate-independent phosphoglycerate mutase (514 aa).

Mn(2+)-binding residues include Asp14 and Ser64. The Phosphoserine intermediate role is filled by Ser64. Residues His125, 155 to 156 (RD), Arg187, Arg193, 263 to 266 (RADR), and Lys336 each bind substrate. Positions 403, 407, 444, 445, and 463 each coordinate Mn(2+).

The protein belongs to the BPG-independent phosphoglycerate mutase family. In terms of assembly, monomer. Mn(2+) is required as a cofactor.

It catalyses the reaction (2R)-2-phosphoglycerate = (2R)-3-phosphoglycerate. The protein operates within carbohydrate degradation; glycolysis; pyruvate from D-glyceraldehyde 3-phosphate: step 3/5. Catalyzes the interconversion of 2-phosphoglycerate and 3-phosphoglycerate. This chain is 2,3-bisphosphoglycerate-independent phosphoglycerate mutase, found in Shewanella sp. (strain W3-18-1).